The following is a 218-amino-acid chain: Probable transaldolase (218 aa).

The active-site Schiff-base intermediate with substrate is K83.

This sequence belongs to the transaldolase family. Type 3B subfamily.

Its subcellular location is the cytoplasm. The enzyme catalyses D-sedoheptulose 7-phosphate + D-glyceraldehyde 3-phosphate = D-erythrose 4-phosphate + beta-D-fructose 6-phosphate. It functions in the pathway carbohydrate degradation; pentose phosphate pathway; D-glyceraldehyde 3-phosphate and beta-D-fructose 6-phosphate from D-ribose 5-phosphate and D-xylulose 5-phosphate (non-oxidative stage): step 2/3. Its function is as follows. Transaldolase is important for the balance of metabolites in the pentose-phosphate pathway. The chain is Probable transaldolase from Parvibaculum lavamentivorans (strain DS-1 / DSM 13023 / NCIMB 13966).